A 110-amino-acid chain; its full sequence is Thiosulfate sulfurtransferase GlpE (110 aa).

In terms of domain architecture, Rhodanese spans 17 to 105 (RENGAQVVDI…WRSVYPADTS (89 aa)). The active-site Cysteine persulfide intermediate is Cys-65.

This sequence belongs to the GlpE family.

It is found in the cytoplasm. The catalysed reaction is thiosulfate + hydrogen cyanide = thiocyanate + sulfite + 2 H(+). It carries out the reaction thiosulfate + [thioredoxin]-dithiol = [thioredoxin]-disulfide + hydrogen sulfide + sulfite + 2 H(+). Functionally, transferase that catalyzes the transfer of sulfur from thiosulfate to thiophilic acceptors such as cyanide or dithiols. May function in a CysM-independent thiosulfate assimilation pathway by catalyzing the conversion of thiosulfate to sulfite, which can then be used for L-cysteine biosynthesis. This is Thiosulfate sulfurtransferase GlpE from Pseudomonas paraeruginosa (strain DSM 24068 / PA7) (Pseudomonas aeruginosa (strain PA7)).